The primary structure comprises 164 residues: Lipoprotein signal peptidase (164 aa).

3 consecutive transmembrane segments (helical) span residues 12 to 32 (WLWLVVVVLIIDLGSKYLILQ), 70 to 90 (WFFAGIAIGISVTLVVMMYRS), and 102 to 122 (ALIIGGALGNLFDRLWHGFVV). Active-site residues include aspartate 123 and aspartate 141. Residues 137–157 (FNLADTAICVGAALIVLEGFL) traverse the membrane as a helical segment.

Belongs to the peptidase A8 family.

It is found in the cell inner membrane. The enzyme catalyses Release of signal peptides from bacterial membrane prolipoproteins. Hydrolyzes -Xaa-Yaa-Zaa-|-(S,diacylglyceryl)Cys-, in which Xaa is hydrophobic (preferably Leu), and Yaa (Ala or Ser) and Zaa (Gly or Ala) have small, neutral side chains.. It functions in the pathway protein modification; lipoprotein biosynthesis (signal peptide cleavage). Its function is as follows. This protein specifically catalyzes the removal of signal peptides from prolipoproteins. The protein is Lipoprotein signal peptidase of Escherichia coli O157:H7.